A 146-amino-acid chain; its full sequence is Urease accessory protein UreE 1 (146 aa).

It belongs to the UreE family.

The protein resides in the cytoplasm. Functionally, involved in urease metallocenter assembly. Binds nickel. Probably functions as a nickel donor during metallocenter assembly. This is Urease accessory protein UreE 1 from Pseudomonas syringae pv. syringae (strain B728a).